The following is a 151-amino-acid chain: Phosphoribosyl-AMP cyclohydrolase (151 aa).

A compositionally biased stretch (polar residues) spans 1 to 13; it reads MMTLTFASPPQNK. A disordered region spans residues 1-20; that stretch reads MMTLTFASPPQNKSDLETGP. Asp93 is a binding site for Mg(2+). Cys94 serves as a coordination point for Zn(2+). 2 residues coordinate Mg(2+): Asp95 and Asp97. Zn(2+) contacts are provided by Cys112 and Cys119.

This sequence belongs to the PRA-CH family. In terms of assembly, homodimer. Mg(2+) is required as a cofactor. It depends on Zn(2+) as a cofactor.

Its subcellular location is the cytoplasm. The enzyme catalyses 1-(5-phospho-beta-D-ribosyl)-5'-AMP + H2O = 1-(5-phospho-beta-D-ribosyl)-5-[(5-phospho-beta-D-ribosylamino)methylideneamino]imidazole-4-carboxamide. The protein operates within amino-acid biosynthesis; L-histidine biosynthesis; L-histidine from 5-phospho-alpha-D-ribose 1-diphosphate: step 3/9. In terms of biological role, catalyzes the hydrolysis of the adenine ring of phosphoribosyl-AMP. In Sinorhizobium medicae (strain WSM419) (Ensifer medicae), this protein is Phosphoribosyl-AMP cyclohydrolase.